Reading from the N-terminus, the 217-residue chain is DNA repair protein homolog YobH (217 aa).

The UmuC domain maps to methionine 1–glycine 68.

Belongs to the DNA polymerase type-Y family.

The polypeptide is DNA repair protein homolog YobH (yobH) (Bacillus subtilis (strain 168)).